Consider the following 475-residue polypeptide: MSHKEPSAAETSTVVHSEEDKAFCIGTGAVISEEREKEVLKNLQNSLTGKTAEENLNDEANHTSSDKSKSEDYQPSNVNVWALRKEKMIPKKHSHVKQEKRFSKSLQLQDPNVWPSPEIAEKQVEDRKLSDDSQKPLAPKANGKEKWVTITPNFTHTPISNRKSSRSRNDGSRRNGNGRRRGNYSSHGSNKRQTNYSREKDASRSIDSSNPSAEYRDDINNTFGSQTVSSANGKEVPQTSEDSSSQAPHHSSSSGHAPSQQGGNKHSYKKSDSQQSFHHKGRNTRKGQRHNNGFYRNIANNIQGPFPNYPVVVNGNGVNPYLCDVQAFLTSQLEYYFSIENLCKDMFLRKHMDDEGYVPLAFLASFNRIKSFSTDLNLLHAACKASDIIDVAIDLQSPMSIKVRRKETWSPWILPSESRLKFEMAKYPQINSSSSMSPLASSISNLTISPPFIPSSVDSIIKRDVQTEVEDKLTV.

A disordered region spans residues 42–292 (NLQNSLTGKT…NTRKGQRHNN (251 aa)). 2 stretches are compositionally biased toward basic and acidic residues: residues 59–72 (EANH…KSED) and 119–134 (IAEK…DDSQ). Polar residues-rich tracts occupy residues 150-159 (ITPNFTHTPI) and 220-242 (NNTF…TSED). Low complexity predominate over residues 243–263 (SSSQAPHHSSSSGHAPSQQGG). Positions 277–289 (FHHKGRNTRKGQR) are enriched in basic residues. Positions 319–408 (NPYLCDVQAF…MSIKVRRKET (90 aa)) constitute an HTH La-type RNA-binding domain. Residue Thr-408 is modified to Phosphothreonine. Ser-410 carries the post-translational modification Phosphoserine.

The protein localises to the cytoplasm. This is an uncharacterized protein from Schizosaccharomyces pombe (strain 972 / ATCC 24843) (Fission yeast).